The following is a 240-amino-acid chain: Poxin (240 aa).

The active-site Proton donor is the H46. Y181 acts as the Shared with catalytic histidine of dimeric partner in catalysis. The Proton acceptor; shared with catalytic histidine of dimeric partner role is filled by K185.

This sequence belongs to the poxin family. As to quaternary structure, homodimer.

It carries out the reaction 2',3'-cGAMP + H2O = Gp(2'-5')Ap(3') + H(+). Its function is as follows. Nuclease that cleaves host 2',3'-cGAMP. This Bombyx mori (Silk moth) protein is Poxin (p26).